A 245-amino-acid chain; its full sequence is Ribonuclease PH (245 aa).

Residues Arg-93 and 131-133 (GTR) contribute to the phosphate site.

The protein belongs to the RNase PH family. Homohexameric ring arranged as a trimer of dimers.

It carries out the reaction tRNA(n+1) + phosphate = tRNA(n) + a ribonucleoside 5'-diphosphate. Phosphorolytic 3'-5' exoribonuclease that plays an important role in tRNA 3'-end maturation. Removes nucleotide residues following the 3'-CCA terminus of tRNAs; can also add nucleotides to the ends of RNA molecules by using nucleoside diphosphates as substrates, but this may not be physiologically important. Probably plays a role in initiation of 16S rRNA degradation (leading to ribosome degradation) during starvation. This chain is Ribonuclease PH, found in Corynebacterium efficiens (strain DSM 44549 / YS-314 / AJ 12310 / JCM 11189 / NBRC 100395).